We begin with the raw amino-acid sequence, 370 residues long: Dual-specificity RNA methyltransferase RlmN (370 aa).

The active-site Proton acceptor is the glutamate 97. The Radical SAM core domain maps to 103–340 (EKSRGTLCIS…CTVRRTRGDD (238 aa)). A disulfide bridge connects residues cysteine 110 and cysteine 345. [4Fe-4S] cluster is bound by residues cysteine 117, cysteine 121, and cysteine 124. S-adenosyl-L-methionine-binding positions include 170–171 (GE), serine 202, 224–226 (SLH), and asparagine 302. The active-site S-methylcysteine intermediate is cysteine 345.

The protein belongs to the radical SAM superfamily. RlmN family. It depends on [4Fe-4S] cluster as a cofactor.

The protein localises to the cytoplasm. The enzyme catalyses adenosine(2503) in 23S rRNA + 2 reduced [2Fe-2S]-[ferredoxin] + 2 S-adenosyl-L-methionine = 2-methyladenosine(2503) in 23S rRNA + 5'-deoxyadenosine + L-methionine + 2 oxidized [2Fe-2S]-[ferredoxin] + S-adenosyl-L-homocysteine. The catalysed reaction is adenosine(37) in tRNA + 2 reduced [2Fe-2S]-[ferredoxin] + 2 S-adenosyl-L-methionine = 2-methyladenosine(37) in tRNA + 5'-deoxyadenosine + L-methionine + 2 oxidized [2Fe-2S]-[ferredoxin] + S-adenosyl-L-homocysteine. Specifically methylates position 2 of adenine 2503 in 23S rRNA and position 2 of adenine 37 in tRNAs. m2A2503 modification seems to play a crucial role in the proofreading step occurring at the peptidyl transferase center and thus would serve to optimize ribosomal fidelity. The protein is Dual-specificity RNA methyltransferase RlmN of Hydrogenovibrio crunogenus (strain DSM 25203 / XCL-2) (Thiomicrospira crunogena).